Here is a 416-residue protein sequence, read N- to C-terminus: Glutamyl-tRNA reductase (416 aa).

Residues 49–52 (TCNR), S105, 110–112 (EPQ), and Q116 contribute to the substrate site. The active-site Nucleophile is C50. 185 to 190 (GAGETI) is an NADP(+) binding site.

Belongs to the glutamyl-tRNA reductase family. In terms of assembly, homodimer.

The enzyme catalyses (S)-4-amino-5-oxopentanoate + tRNA(Glu) + NADP(+) = L-glutamyl-tRNA(Glu) + NADPH + H(+). It functions in the pathway porphyrin-containing compound metabolism; protoporphyrin-IX biosynthesis; 5-aminolevulinate from L-glutamyl-tRNA(Glu): step 1/2. Functionally, catalyzes the NADPH-dependent reduction of glutamyl-tRNA(Glu) to glutamate 1-semialdehyde (GSA). The polypeptide is Glutamyl-tRNA reductase (Shewanella frigidimarina (strain NCIMB 400)).